We begin with the raw amino-acid sequence, 433 residues long: Legumain (433 aa).

An N-terminal signal peptide occupies residues 1-17 (MIWEFTVLLSLVLGTGA). Residues 18–25 (VPLEDPED) constitute a propeptide that is removed on maturation. The N-linked (GlcNAc...) asparagine glycan is linked to Asn91. His148 is an active-site residue. Residue Asn167 is glycosylated (N-linked (GlcNAc...) asparagine). The Nucleophile role is filled by Cys189. N-linked (GlcNAc...) asparagine glycosylation is found at Asn263 and Asn272. Residues 324–433 (DLQESRRLVQ…SMNKVCHGYY (110 aa)) constitute a propeptide that is removed on maturation. Intrachain disulfides connect Cys378-Cys412 and Cys390-Cys429.

This sequence belongs to the peptidase C13 family. In terms of assembly, homodimer before autocatalytic removal of the propeptide. Monomer after autocatalytic processing. May interact with integrins. In terms of processing, activated by autocatalytic processing at pH 4. Detected in kidney (at protein level).

The protein resides in the lysosome. The catalysed reaction is Hydrolysis of proteins and small molecule substrates at -Asn-|-Xaa- bonds.. Functionally, has a strict specificity for hydrolysis of asparaginyl bonds. Can also cleave aspartyl bonds slowly, especially under acidic conditions. Involved in the processing of proteins for MHC class II antigen presentation in the lysosomal/endosomal system. Also involved in MHC class I antigen presentation in cross-presenting dendritic cells by mediating cleavage and maturation of Perforin-2 (MPEG1), thereby promoting antigen translocation in the cytosol. Required for normal lysosomal protein degradation in renal proximal tubules. Required for normal degradation of internalized EGFR. Plays a role in the regulation of cell proliferation via its role in EGFR degradation. This is Legumain (LGMN) from Bos taurus (Bovine).